The following is a 1744-amino-acid chain: Tanabin (1744 aa).

Residues M1–E12 are head. The coil 1A stretch occupies residues V8–L48. One can recognise an IF rod domain in the interval E13–I320. Residues R49–K60 form a linker 1 region. Positions H61–M156 are coil 1B. Residues E157 to P179 form a linker 12 region. Residues V180–W193 form a coil 2A region. Residues Q194–E199 are linker 2. The tract at residues Y200–E314 is coil 2B. The segment at A315–F1744 is tail. Basic and acidic residues-rich tracts occupy residues R341–L371 and H785–S815. 7 disordered regions span residues R341–Q372, H785–E816, E976–E996, S1032–D1093, D1340–V1470, S1485–N1506, and A1560–H1722. Positions L980 to G990 are enriched in polar residues. Over residues E1034–Q1056 the composition is skewed to acidic residues. Residues V1074–E1086 show a composition bias toward basic and acidic residues. Over residues D1340–Q1351 the composition is skewed to acidic residues. A compositionally biased stretch (basic and acidic residues) spans E1352 to N1367. Positions E1368–D1377 are enriched in acidic residues. Positions H1386 to Q1398 are enriched in basic and acidic residues. Residues L1412–E1421 show a composition bias toward acidic residues. Positions P1423–N1432 are enriched in basic and acidic residues. Polar residues predominate over residues D1433 to T1442. Residues D1445 to E1460 are compositionally biased toward basic and acidic residues. The span at D1496–E1505 shows a compositional bias: acidic residues. Polar residues-rich tracts occupy residues E1576–P1586, E1597–S1621, and S1629–T1639. Positions R1680–S1691 are enriched in acidic residues. Residues N1698 to V1709 show a composition bias toward basic and acidic residues.

It belongs to the intermediate filament family. In terms of tissue distribution, growth cones of embryonic vertebrate neurons.

The sequence is that of Tanabin from Xenopus laevis (African clawed frog).